A 295-amino-acid polypeptide reads, in one-letter code: UDP-N-acetylenolpyruvoylglucosamine reductase (295 aa).

An FAD-binding PCMH-type domain is found at 23–188 (KVGGPADFLA…ISAKFALKPG (166 aa)). Residue Arg-167 is part of the active site. Ser-217 serves as the catalytic Proton donor. Glu-287 is an active-site residue.

This sequence belongs to the MurB family. FAD is required as a cofactor.

Its subcellular location is the cytoplasm. The enzyme catalyses UDP-N-acetyl-alpha-D-muramate + NADP(+) = UDP-N-acetyl-3-O-(1-carboxyvinyl)-alpha-D-glucosamine + NADPH + H(+). Its pathway is cell wall biogenesis; peptidoglycan biosynthesis. Functionally, cell wall formation. This is UDP-N-acetylenolpyruvoylglucosamine reductase from Streptococcus pyogenes serotype M18 (strain MGAS8232).